Reading from the N-terminus, the 509-residue chain is Maturase K (509 aa).

This sequence belongs to the intron maturase 2 family. MatK subfamily.

It localises to the plastid. The protein localises to the chloroplast. Usually encoded in the trnK tRNA gene intron. Probably assists in splicing its own and other chloroplast group II introns. This Avicennia marina (Grey mangrove) protein is Maturase K.